The sequence spans 89 residues: Myrmicitoxin(1)-Pm2a (89 aa).

The N-terminal stretch at Met-1 to Cys-22 is a signal peptide. The propeptide occupies Ala-23–Pro-61. Asn-88 is subject to Asparagine amide.

This sequence belongs to the formicidae venom clade 1 family. As to expression, expressed by the venom gland.

The protein localises to the secreted. Toxin that potently modulates mammalian voltage-gated sodium (Nav) channels, reducing the voltage threshold for activation and inhibiting channel inactivation. Shows activity on hNav1.6/SCN8A (EC(50)=176 nM), mNav1.7/SCN9A (EC(50)=102 nM) and hNav1.7 (EC(50)=154 nM). In vivo, causes spontaneous, gradual and long-lasting nocifensive behaviors by intraplantar injection in mice, as well as pronounced swelling of the injected paw. Does not have effect on insects (blowflies). The protein is Myrmicitoxin(1)-Pm2a of Pogonomyrmex maricopa (Maricopa harvester ant).